Consider the following 261-residue polypeptide: Guanine nucleotide exchange factor BopE (261 aa).

Basic and acidic residues predominate over residues 241–253 (RRAAQDASRDEKG). The interval 241-261 (RRAAQDASRDEKGAANAADGA) is disordered.

The protein belongs to the GEF (guanine exchange factor) SopE family. As to quaternary structure, monomer. Interacts with human CDC42.

It is found in the secreted. Activator for both CDC42 and RAC1 by directly interacting with these Rho GTPases and acting as a guanine nucleotide exchange factor (GEF). This activation results in actin cytoskeleton rearrangements and stimulates membrane ruffling, thus promoting bacterial entry into non-phagocytic cells. The polypeptide is Guanine nucleotide exchange factor BopE (bopE) (Burkholderia thailandensis (strain ATCC 700388 / DSM 13276 / CCUG 48851 / CIP 106301 / E264)).